Here is a 494-residue protein sequence, read N- to C-terminus: Cysteine--tRNA ligase (494 aa).

Zn(2+) is bound at residue C29. The 'HIGH' region motif lies at V31–H41. C216, H241, and E245 together coordinate Zn(2+). The 'KMSKS' region signature appears at K273 to S277. An ATP-binding site is contributed by K276.

The protein belongs to the class-I aminoacyl-tRNA synthetase family. Monomer. Requires Zn(2+) as cofactor.

It localises to the cytoplasm. It catalyses the reaction tRNA(Cys) + L-cysteine + ATP = L-cysteinyl-tRNA(Cys) + AMP + diphosphate. The sequence is that of Cysteine--tRNA ligase from Cyanothece sp. (strain PCC 7425 / ATCC 29141).